The following is a 156-amino-acid chain: Small ribosomal subunit protein uS17A (156 aa).

At S2 the chain carries N-acetylserine. Residues K15, K46, K56, K57, K79, K96, K105, K133, K141, and K148 each participate in a glycyl lysine isopeptide (Lys-Gly) (interchain with G-Cter in ubiquitin) cross-link.

It belongs to the universal ribosomal protein uS17 family. In terms of assembly, component of the small ribosomal subunit (SSU). Mature yeast ribosomes consist of a small (40S) and a large (60S) subunit. The 40S small subunit contains 1 molecule of ribosomal RNA (18S rRNA) and 33 different proteins (encoded by 57 genes). The large 60S subunit contains 3 rRNA molecules (25S, 5.8S and 5S rRNA) and 46 different proteins (encoded by 81 genes). In terms of processing, N-terminally acetylated by acetyltransferase NatA.

It is found in the cytoplasm. Its function is as follows. Component of the ribosome, a large ribonucleoprotein complex responsible for the synthesis of proteins in the cell. The small ribosomal subunit (SSU) binds messenger RNAs (mRNAs) and translates the encoded message by selecting cognate aminoacyl-transfer RNA (tRNA) molecules. The large subunit (LSU) contains the ribosomal catalytic site termed the peptidyl transferase center (PTC), which catalyzes the formation of peptide bonds, thereby polymerizing the amino acids delivered by tRNAs into a polypeptide chain. The nascent polypeptides leave the ribosome through a tunnel in the LSU and interact with protein factors that function in enzymatic processing, targeting, and the membrane insertion of nascent chains at the exit of the ribosomal tunnel. The protein is Small ribosomal subunit protein uS17A of Saccharomyces cerevisiae (strain ATCC 204508 / S288c) (Baker's yeast).